Here is a 1260-residue protein sequence, read N- to C-terminus: Myosin-1 (1260 aa).

The Myosin motor domain maps to valine 34–aspartate 713. Glycine 127–threonine 134 contacts ATP. A Phosphoserine modification is found at serine 355. Residues serine 402–serine 484 are actin-binding. 2 IQ domains span residues tyrosine 717–serine 737 and alanine 738–arginine 763. The TH1 domain occupies lysine 769–alanine 959. Polar residues-rich tracts occupy residues serine 948–glutamine 963 and threonine 972–tyrosine 988. A disordered region spans residues serine 948–proline 1106. The segment covering glycine 989 to histidine 1013 has biased composition (low complexity). A compositionally biased stretch (polar residues) spans glutamine 1030–arginine 1064. A compositionally biased stretch (low complexity) spans glutamine 1065–alanine 1082. Pro residues predominate over residues alanine 1092–threonine 1101. Positions glutamine 1103–glutamate 1165 constitute an SH3 domain.

This sequence belongs to the TRAFAC class myosin-kinesin ATPase superfamily. Myosin family. In terms of processing, phosphorylation of the TEDS site (Ser-355) is required for the polarization of the actin cytoskeleton. Phosphorylation probably activates the myosin-I ATPase activity.

The protein resides in the cytoplasm. The protein localises to the cytoskeleton. Its subcellular location is the actin patch. Type-I myosin implicated in the organization of the actin cytoskeleton. Required for proper actin cytoskeleton polarization. At the cell cortex, assembles in patch-like structures together with proteins from the actin-polymerizing machinery and promotes actin assembly. Functions as actin nucleation-promoting factor (NPF) for the Arp2/3 complex. This chain is Myosin-1 (MYO1), found in Kluyveromyces lactis (strain ATCC 8585 / CBS 2359 / DSM 70799 / NBRC 1267 / NRRL Y-1140 / WM37) (Yeast).